Reading from the N-terminus, the 783-residue chain is ATP-dependent DNA helicase Hel308 (783 aa).

ATP is bound by residues glutamine 29 and 47-54; that span reads VPTASGKT. The region spanning 34–209 is the Helicase ATP-binding domain; that stretch reads ERGVTEGANL…WLDAELVDSD (176 aa). Positions 154 to 157 match the DEAH box motif; it reads DEVH. The Helicase C-terminal domain occupies 242-443; the sequence is QTAAVVADTL…EPALRTHVLA (202 aa). A disordered region spans residues 744 to 783; that stretch reads ETVGHPDPGMDGVAADTDAAPESGGEAGGDEGQASLGDFS.

It belongs to the helicase family. Hel308 subfamily. As to quaternary structure, monomer.

It carries out the reaction Couples ATP hydrolysis with the unwinding of duplex DNA by translocating in the 3'-5' direction.. It catalyses the reaction ATP + H2O = ADP + phosphate + H(+). In terms of biological role, DNA-dependent ATPase and 3'-5' DNA helicase that may be involved in repair of stalled replication forks. The polypeptide is ATP-dependent DNA helicase Hel308 (Halobacterium salinarum (strain ATCC 700922 / JCM 11081 / NRC-1) (Halobacterium halobium)).